The following is a 642-amino-acid chain: Threonine--tRNA ligase (642 aa).

One can recognise a TGS domain in the interval 1-61 (MPVITLPDGS…ETDAELSIIT (61 aa)). The catalytic stretch occupies residues 243 to 534 (DHRKIGKQLD…LIEEYAGRFP (292 aa)). Positions 334, 385, and 511 each coordinate Zn(2+).

It belongs to the class-II aminoacyl-tRNA synthetase family. In terms of assembly, homodimer. Requires Zn(2+) as cofactor.

It localises to the cytoplasm. It catalyses the reaction tRNA(Thr) + L-threonine + ATP = L-threonyl-tRNA(Thr) + AMP + diphosphate + H(+). Its function is as follows. Catalyzes the attachment of threonine to tRNA(Thr) in a two-step reaction: L-threonine is first activated by ATP to form Thr-AMP and then transferred to the acceptor end of tRNA(Thr). Also edits incorrectly charged L-seryl-tRNA(Thr). The sequence is that of Threonine--tRNA ligase from Shewanella sp. (strain W3-18-1).